The sequence spans 256 residues: Enkurin (256 aa).

Positions 48 to 92 are disordered; that stretch reads TMGPAKLEVPSPKDFLKKHSKEKTLPPKKKFDRHEPKKPPVPLRT. The span at 61–72 shows a compositional bias: basic and acidic residues; it reads DFLKKHSKEKTL. Positions 83–89 match the SH3-binding motif; that stretch reads PKKPPVP. In terms of domain architecture, Enkurin spans 160-252; it reads KRNEEVKKAQ…VLEKHKIIYI (93 aa). The IQ domain occupies 176 to 187; that stretch reads IQENLRKAAMKR.

As to quaternary structure, microtubule inner protein component of sperm flagellar doublet microtubules. Binds calmodulin via its IQ domain. Interacts with TRPC1, TRPC2, TRPC5, but not TRPC3. Interacts with CFAP45.

The protein resides in the cytoplasm. The protein localises to the cytoskeleton. It localises to the cilium axoneme. It is found in the flagellum axoneme. In terms of biological role, adapter that functions to localize a calcium-sensitive signal transduction machinery in sperm to a calcium-permeable ion channel. Microtubule inner protein (MIP) part of the dynein-decorated doublet microtubules (DMTs) in cilia axoneme, which is required for motile cilia beating. The sequence is that of Enkurin (ENKUR) from Sus scrofa (Pig).